Here is a 650-residue protein sequence, read N- to C-terminus: Threonine--tRNA ligase (650 aa).

One can recognise a TGS domain in the interval aspartate 3–threonine 65. The segment at aspartate 248–proline 548 is catalytic. Zn(2+)-binding residues include cysteine 349, histidine 400, and histidine 525.

The protein belongs to the class-II aminoacyl-tRNA synthetase family. In terms of assembly, homodimer. Zn(2+) serves as cofactor.

The protein localises to the cytoplasm. It carries out the reaction tRNA(Thr) + L-threonine + ATP = L-threonyl-tRNA(Thr) + AMP + diphosphate + H(+). Catalyzes the attachment of threonine to tRNA(Thr) in a two-step reaction: L-threonine is first activated by ATP to form Thr-AMP and then transferred to the acceptor end of tRNA(Thr). Also edits incorrectly charged L-seryl-tRNA(Thr). The polypeptide is Threonine--tRNA ligase (Anaeromyxobacter dehalogenans (strain 2CP-1 / ATCC BAA-258)).